The primary structure comprises 273 residues: Putative pyruvate, phosphate dikinase regulatory protein (273 aa).

Glycine 153–serine 160 provides a ligand contact to ADP.

Belongs to the pyruvate, phosphate/water dikinase regulatory protein family. PDRP subfamily.

It carries out the reaction N(tele)-phospho-L-histidyl/L-threonyl-[pyruvate, phosphate dikinase] + ADP = N(tele)-phospho-L-histidyl/O-phospho-L-threonyl-[pyruvate, phosphate dikinase] + AMP + H(+). The enzyme catalyses N(tele)-phospho-L-histidyl/O-phospho-L-threonyl-[pyruvate, phosphate dikinase] + phosphate + H(+) = N(tele)-phospho-L-histidyl/L-threonyl-[pyruvate, phosphate dikinase] + diphosphate. Bifunctional serine/threonine kinase and phosphorylase involved in the regulation of the pyruvate, phosphate dikinase (PPDK) by catalyzing its phosphorylation/dephosphorylation. The sequence is that of Putative pyruvate, phosphate dikinase regulatory protein from Ehrlichia canis (strain Jake).